Reading from the N-terminus, the 156-residue chain is Low molecular weight phosphotyrosine protein phosphatase (156 aa).

The Nucleophile role is filled by cysteine 11. The active site involves arginine 17. Residue aspartate 128 is the Proton donor of the active site.

Belongs to the low molecular weight phosphotyrosine protein phosphatase family.

It localises to the cytoplasm. The enzyme catalyses O-phospho-L-tyrosyl-[protein] + H2O = L-tyrosyl-[protein] + phosphate. It catalyses the reaction a phosphate monoester + H2O = an alcohol + phosphate. In terms of biological role, may contribute to dephosphorylation of 'Tyr-15' of cdc2. This Schizosaccharomyces pombe (strain 972 / ATCC 24843) (Fission yeast) protein is Low molecular weight phosphotyrosine protein phosphatase (stp1).